Reading from the N-terminus, the 429-residue chain is Histidine--tRNA ligase (429 aa).

This sequence belongs to the class-II aminoacyl-tRNA synthetase family. In terms of assembly, homodimer.

The protein localises to the cytoplasm. The catalysed reaction is tRNA(His) + L-histidine + ATP = L-histidyl-tRNA(His) + AMP + diphosphate + H(+). This is Histidine--tRNA ligase from Pseudomonas putida (strain W619).